A 202-amino-acid chain; its full sequence is NADH-quinone oxidoreductase subunit C (202 aa).

The protein belongs to the complex I 30 kDa subunit family. NDH-1 is composed of 14 different subunits. Subunits NuoB, C, D, E, F, and G constitute the peripheral sector of the complex.

It localises to the cell inner membrane. The enzyme catalyses a quinone + NADH + 5 H(+)(in) = a quinol + NAD(+) + 4 H(+)(out). Functionally, NDH-1 shuttles electrons from NADH, via FMN and iron-sulfur (Fe-S) centers, to quinones in the respiratory chain. The immediate electron acceptor for the enzyme in this species is believed to be ubiquinone. Couples the redox reaction to proton translocation (for every two electrons transferred, four hydrogen ions are translocated across the cytoplasmic membrane), and thus conserves the redox energy in a proton gradient. The chain is NADH-quinone oxidoreductase subunit C from Bartonella quintana (strain Toulouse) (Rochalimaea quintana).